We begin with the raw amino-acid sequence, 956 residues long: Calsyntenin-3 (956 aa).

An N-terminal signal peptide occupies residues 1–19 (MTLLLLPLLLASLLASCSC). Over 20–847 (NKANKHKPWI…SHRNSMIPSA (828 aa)) the chain is Extracellular. 2 Cadherin domains span residues 29–145 (IEAE…APVF) and 146–246 (VERL…KPSW). 5 N-linked (GlcNAc...) asparagine glycosylation sites follow: Asn299, Asn327, Asn347, Asn507, and Asn740. The chain crosses the membrane as a helical span at residues 848–868 (ATLIIVVCVGFLVLMVVLGLV). Topologically, residues 869–956 (RIHSLHRRVS…RIIETPPHRY (88 aa)) are cytoplasmic. The interval 917–956 (ACVTGAVGGQQEDEDSSDSEVADSPSSDERRIIETPPHRY) is disordered. The segment covering 927-937 (QEDEDSSDSEV) has biased composition (acidic residues). Residues 943-956 (SDERRIIETPPHRY) show a composition bias toward basic and acidic residues.

Belongs to the calsyntenin family. Interacts (via cadherin domains) with both alpha and beta isoforms of neurexins (NRXN1, NRXN2 and NRXN3). Directly interacts with APBA2. Forms a tripartite complex with APBA2 and APP. Interacts with low affinity with KLC1. Interacts with SLC23A2/SVCT2. Post-translationally, proteolytically processed under normal cellular conditions. A primary zeta-cleavage generates a large extracellular (soluble) N-terminal domain (sAlc) and a short C-terminal transmembrane fragment (CTF1). A secondary cleavage catalyzed by gamma-secretase within the transmembrane domain releases the beta-Alc-beta chain in the extracellular milieu and produces an intracellular fragment (AlcICD). This processing is strongly suppressed in the tripartite complex formed with APBA2 and APP, which seems to prevent the association with gamma-secretase.

The protein localises to the postsynaptic cell membrane. It localises to the endoplasmic reticulum membrane. It is found in the golgi apparatus membrane. The protein resides in the cell projection. Its subcellular location is the dendrite. Functionally, postsynaptic adhesion molecule that binds to presynaptic neurexins to mediate both excitatory and inhibitory synapse formation. Promotes synapse development by acting as a cell adhesion molecule at the postsynaptic membrane, which associates with both neurexin-alpha and neurexin-beta proteins at the presynaptic membrane. Regulates the balance between excitatory and inhibitory synapses by inhibiting formation of excitatory parallel-fiber synapses and promoting formation of inhibitory synapses in the same neuron. May also be involved in ascorbate (vitamin C) uptake via its interaction with SLC23A2/SVCT2. Complex formation with APBA2 and APP, stabilizes APP metabolism and enhances APBA2-mediated suppression of beta-APP40 secretion, due to the retardation of intracellular APP maturation. The protein is Calsyntenin-3 (CLSTN3) of Pongo abelii (Sumatran orangutan).